Consider the following 155-residue polypeptide: MANTSSTTSDIVVRARVLIADDEGTLLEFEAENEHCLMRGAHEVRVIASPELDALHNGPYNEIALGDYTFHFNLVAANRFGAQVMLFAKRDDIKVSGAVFRLKVWNSKKRAVAPPHHEPEPVPAEEGAVADRAEPESGDAPPSPKKQKLDEREQD.

The tract at residues Lys-109–Asp-155 is disordered.

In Orgyia pseudotsugata multicapsid polyhedrosis virus (OpMNPV), this protein is Telokin-like protein 20 homolog.